Consider the following 73-residue polypeptide: UPF0346 protein SH1485 (73 aa).

Belongs to the UPF0346 family.

This chain is UPF0346 protein SH1485, found in Staphylococcus haemolyticus (strain JCSC1435).